Consider the following 122-residue polypeptide: Ferredoxin (122 aa).

Residues M1 to K33 are disordered. Positions T8–P14 are targeting peptide. Positions A40–E122 constitute a 2Fe-2S ferredoxin-type domain. [2Fe-2S] cluster contacts are provided by C75, C80, C83, and C117.

Belongs to the 2Fe2S plant-type ferredoxin family. The cofactor is [2Fe-2S] cluster.

The protein localises to the encapsulin nanocompartment. In terms of biological role, cargo protein of a type 1 encapsulin nanocompartment. An iron-binding protein probably involved in iron mineralization in the encapsulin nanocompartment. 2 different cargo proteins have been identified (IMEF and Fer); when both are expressed in E.coli with the shell protein only IMEF is detected within the nanocompartment. E.coli expressing all 3 genes stores the largest amount of iron and is protected from Fe/H2O2-induced oxidative stress. The polypeptide is Ferredoxin (Bacillus thermotolerans (Quasibacillus thermotolerans)).